The following is a 545-amino-acid chain: Glucose-6-phosphate isomerase (545 aa).

Glu-351 acts as the Proton donor in catalysis. Residues His-382 and Lys-510 contribute to the active site.

Belongs to the GPI family.

The protein localises to the cytoplasm. It carries out the reaction alpha-D-glucose 6-phosphate = beta-D-fructose 6-phosphate. It functions in the pathway carbohydrate biosynthesis; gluconeogenesis. It participates in carbohydrate degradation; glycolysis; D-glyceraldehyde 3-phosphate and glycerone phosphate from D-glucose: step 2/4. In terms of biological role, catalyzes the reversible isomerization of glucose-6-phosphate to fructose-6-phosphate. This is Glucose-6-phosphate isomerase from Shewanella oneidensis (strain ATCC 700550 / JCM 31522 / CIP 106686 / LMG 19005 / NCIMB 14063 / MR-1).